The primary structure comprises 99 residues: Large ribosomal subunit protein uL23c (99 aa).

The protein belongs to the universal ribosomal protein uL23 family. As to quaternary structure, part of the 50S ribosomal subunit.

The protein resides in the plastid. Its subcellular location is the chloroplast. In terms of biological role, binds to 23S rRNA. The chain is Large ribosomal subunit protein uL23c (rpl23) from Emiliania huxleyi (Coccolithophore).